We begin with the raw amino-acid sequence, 131 residues long: Small ribosomal subunit protein uS8 (131 aa).

The protein belongs to the universal ribosomal protein uS8 family. In terms of assembly, part of the 30S ribosomal subunit. Contacts proteins S5 and S12.

Its function is as follows. One of the primary rRNA binding proteins, it binds directly to 16S rRNA central domain where it helps coordinate assembly of the platform of the 30S subunit. In Chlorobaculum tepidum (strain ATCC 49652 / DSM 12025 / NBRC 103806 / TLS) (Chlorobium tepidum), this protein is Small ribosomal subunit protein uS8.